Reading from the N-terminus, the 248-residue chain is tRNA pseudouridine synthase A (248 aa).

Asp55 serves as the catalytic Nucleophile. Tyr114 lines the substrate pocket.

It belongs to the tRNA pseudouridine synthase TruA family. Homodimer.

It catalyses the reaction uridine(38/39/40) in tRNA = pseudouridine(38/39/40) in tRNA. Formation of pseudouridine at positions 38, 39 and 40 in the anticodon stem and loop of transfer RNAs. In Rhodopseudomonas palustris (strain ATCC BAA-98 / CGA009), this protein is tRNA pseudouridine synthase A.